Here is a 266-residue protein sequence, read N- to C-terminus: Hydroxyethylthiazole kinase (266 aa).

Residue Met43 participates in substrate binding. ATP-binding residues include Arg119 and Thr166. Gly193 serves as a coordination point for substrate.

The protein belongs to the Thz kinase family. The cofactor is Mg(2+).

The enzyme catalyses 5-(2-hydroxyethyl)-4-methylthiazole + ATP = 4-methyl-5-(2-phosphooxyethyl)-thiazole + ADP + H(+). Its pathway is cofactor biosynthesis; thiamine diphosphate biosynthesis; 4-methyl-5-(2-phosphoethyl)-thiazole from 5-(2-hydroxyethyl)-4-methylthiazole: step 1/1. Functionally, catalyzes the phosphorylation of the hydroxyl group of 4-methyl-5-beta-hydroxyethylthiazole (THZ). This Methanococcus maripaludis (strain C5 / ATCC BAA-1333) protein is Hydroxyethylthiazole kinase.